The primary structure comprises 640 residues: Threonine--tRNA ligase (640 aa).

Residues 1–61 enclose the TGS domain; that stretch reads MPIITLPDGS…TNDAEIQIIT (61 aa). Residues 242–533 form a catalytic region; sequence DHRKLGKKLS…LIENYSGNLP (292 aa). Residues Cys-333, His-384, and His-510 each contribute to the Zn(2+) site.

This sequence belongs to the class-II aminoacyl-tRNA synthetase family. Homodimer. It depends on Zn(2+) as a cofactor.

Its subcellular location is the cytoplasm. The catalysed reaction is tRNA(Thr) + L-threonine + ATP = L-threonyl-tRNA(Thr) + AMP + diphosphate + H(+). Catalyzes the attachment of threonine to tRNA(Thr) in a two-step reaction: L-threonine is first activated by ATP to form Thr-AMP and then transferred to the acceptor end of tRNA(Thr). Also edits incorrectly charged L-seryl-tRNA(Thr). The chain is Threonine--tRNA ligase from Prochlorococcus marinus (strain NATL1A).